Reading from the N-terminus, the 165-residue chain is Crossover junction endodeoxyribonuclease RuvC (165 aa).

Active-site residues include aspartate 7, glutamate 68, and histidine 142. Mg(2+)-binding residues include aspartate 7, glutamate 68, and histidine 142.

It belongs to the RuvC family. As to quaternary structure, homodimer which binds Holliday junction (HJ) DNA. The HJ becomes 2-fold symmetrical on binding to RuvC with unstacked arms; it has a different conformation from HJ DNA in complex with RuvA. In the full resolvosome a probable DNA-RuvA(4)-RuvB(12)-RuvC(2) complex forms which resolves the HJ. Mg(2+) is required as a cofactor.

It localises to the cytoplasm. The enzyme catalyses Endonucleolytic cleavage at a junction such as a reciprocal single-stranded crossover between two homologous DNA duplexes (Holliday junction).. Functionally, the RuvA-RuvB-RuvC complex processes Holliday junction (HJ) DNA during genetic recombination and DNA repair. Endonuclease that resolves HJ intermediates. Cleaves cruciform DNA by making single-stranded nicks across the HJ at symmetrical positions within the homologous arms, yielding a 5'-phosphate and a 3'-hydroxyl group; requires a central core of homology in the junction. The consensus cleavage sequence is 5'-(A/T)TT(C/G)-3'. Cleavage occurs on the 3'-side of the TT dinucleotide at the point of strand exchange. HJ branch migration catalyzed by RuvA-RuvB allows RuvC to scan DNA until it finds its consensus sequence, where it cleaves and resolves the cruciform DNA. The polypeptide is Crossover junction endodeoxyribonuclease RuvC (Anaplasma marginale (strain Florida)).